Reading from the N-terminus, the 246-residue chain is Type III pantothenate kinase (246 aa).

11-18 (DIGNSFIK) is a binding site for ATP. Residues Tyr95 and 102–105 (GVDR) contribute to the substrate site. Catalysis depends on Asp104, which acts as the Proton acceptor. Asp125 provides a ligand contact to K(+). Thr128 contacts ATP. Position 179 (Thr179) interacts with substrate.

It belongs to the type III pantothenate kinase family. Homodimer. Requires NH4(+) as cofactor. K(+) serves as cofactor.

Its subcellular location is the cytoplasm. The enzyme catalyses (R)-pantothenate + ATP = (R)-4'-phosphopantothenate + ADP + H(+). It participates in cofactor biosynthesis; coenzyme A biosynthesis; CoA from (R)-pantothenate: step 1/5. Its function is as follows. Catalyzes the phosphorylation of pantothenate (Pan), the first step in CoA biosynthesis. The chain is Type III pantothenate kinase from Pseudoalteromonas atlantica (strain T6c / ATCC BAA-1087).